The sequence spans 118 residues: Putative pterin-4-alpha-carbinolamine dehydratase (118 aa).

This sequence belongs to the pterin-4-alpha-carbinolamine dehydratase family.

The catalysed reaction is (4aS,6R)-4a-hydroxy-L-erythro-5,6,7,8-tetrahydrobiopterin = (6R)-L-erythro-6,7-dihydrobiopterin + H2O. This is Putative pterin-4-alpha-carbinolamine dehydratase from Xanthomonas campestris pv. campestris (strain B100).